Reading from the N-terminus, the 182-residue chain is T-cell surface glycoprotein CD3 gamma chain (182 aa).

The first 22 residues, Met1–Ala22, serve as a signal peptide directing secretion. Residues Gln23–Gln98 enclose the Ig-like domain. Residues Gln23–Ser116 lie on the Extracellular side of the membrane. An intrachain disulfide couples Cys46 to Cys87. N-linked (GlcNAc...) asparagine glycosylation occurs at Asn66. Residues Gly117–Ala137 form a helical membrane-spanning segment. At Gly138–Asn182 the chain is on the cytoplasmic side. Position 145 is a phosphoserine (Ser145). Position 148 is a phosphoserine; by PKC (Ser148). Residues Asp149–Asn177 form the ITAM domain. A Di-leucine motif motif is present at residues Leu153–Leu154.

The TCR-CD3 complex is composed of a CD3D/CD3E and a CD3G/CD3E heterodimers that preferentially associate with TCRalpha and TCRbeta, respectively, to form TCRalpha/CD3E/CD3G and TCRbeta/CD3G/CD3E trimers. In turn, the hexamer interacts with CD3Z homodimer to form the TCR-CD3 complex. Alternatively, TCRalpha and TCRbeta can be replaced by TCRgamma and TCRdelta. Phosphorylated on Tyr residues after T-cell receptor triggering by LCK in association with CD4/CD8. Phosphorylated also by PKC; leading to the TCR complex down-regulation. Post-translationally, phosphorylated on Tyr residues after T-cell receptor triggering by LCK in association with CD4/CD8.

It localises to the cell membrane. Functionally, part of the TCR-CD3 complex present on T-lymphocyte cell surface that plays an essential role in adaptive immune response. When antigen presenting cells (APCs) activate T-cell receptor (TCR), TCR-mediated signals are transmitted across the cell membrane by the CD3 chains CD3D, CD3E, CD3G and CD3Z. All CD3 chains contain immunoreceptor tyrosine-based activation motifs (ITAMs) in their cytoplasmic domain. Upon TCR engagement, these motifs become phosphorylated by Src family protein tyrosine kinases LCK and FYN, resulting in the activation of downstream signaling pathways. In addition to this role of signal transduction in T-cell activation, CD3G plays an essential role in the dynamic regulation of TCR expression at the cell surface. Indeed, constitutive TCR cycling is dependent on the di-leucine-based (diL) receptor-sorting motif present in CD3G. This chain is T-cell surface glycoprotein CD3 gamma chain (CD3G), found in Sus scrofa (Pig).